The following is a 278-amino-acid chain: Para-Rep C1 (278 aa).

The CRESS-DNA virus Rep endonuclease domain maps to methionine 1 to leucine 95. The short motif at phenylalanine 8–asparagine 11 is the RCR-1 element. A divalent metal cation is bound by residues glutamate 33 and histidine 39. Residues histidine 39 to glutamine 41 carry the RCR-2 motif. The short motif at lysine 48 to lysine 69 is the Nuclear localization signal element. The active-site For DNA cleavage activity is the tyrosine 78. An RCR-3 motif is present at residues tyrosine 78–lysine 81. Glutamate 83 contacts a divalent metal cation. The Nuclear localization signal signature appears at leucine 95–histidine 101. ATP is bound at residue glycine 176–serine 178.

This sequence belongs to the nanoviridea/circoviridae replication-associated protein family. Homooligomer (Potential). Rep binds to repeated DNA motifs (iterons). Requires Mg(2+) as cofactor. It depends on Mn(2+) as a cofactor.

Its subcellular location is the host nucleus. It carries out the reaction ATP + H2O = ADP + phosphate + H(+). Its function is as follows. Initiates and terminates the replication only of its own subviral DNA molecule. The closed circular ssDNA genome is first converted to a superhelical dsDNA. Rep binds a specific hairpin at the genome origin of replication. Introduces an endonucleolytic nick within the intergenic region of the genome, thereby initiating the rolling circle replication (RCR). Following cleavage, binds covalently to the 5'-phosphate of DNA as a tyrosyl ester. The cleavage gives rise to a free 3'-OH that serves as a primer for the cellular DNA polymerase. The polymerase synthesizes the (+) strand DNA by rolling circle mechanism. After one round of replication, a Rep-catalyzed nucleotidyl transfer reaction releases a circular single-stranded virus genome, thereby terminating the replication. Displays origin-specific DNA cleavage, nucleotidyl transferase, ATPase and helicase activities. The chain is Para-Rep C1 (C1) from Faba bean necrotic yellows C1 alphasatellite (FBNYC1A).